We begin with the raw amino-acid sequence, 575 residues long: UvrABC system protein C (575 aa).

In terms of domain architecture, GIY-YIG spans 15-90 (AEPGVYQFEA…IKRHQPRYNV (76 aa)). Residues 198-233 (GVLAEPLRREMETAAASQAFERAASLRDRLEAVETF) form the UVR domain.

It belongs to the UvrC family. As to quaternary structure, interacts with UvrB in an incision complex.

The protein localises to the cytoplasm. In terms of biological role, the UvrABC repair system catalyzes the recognition and processing of DNA lesions. UvrC both incises the 5' and 3' sides of the lesion. The N-terminal half is responsible for the 3' incision and the C-terminal half is responsible for the 5' incision. The polypeptide is UvrABC system protein C (Natronomonas pharaonis (strain ATCC 35678 / DSM 2160 / CIP 103997 / JCM 8858 / NBRC 14720 / NCIMB 2260 / Gabara) (Halobacterium pharaonis)).